We begin with the raw amino-acid sequence, 235 residues long: Hydroxyacylglutathione hydrolase (235 aa).

Zn(2+) contacts are provided by His-53, His-55, Asp-57, His-58, His-109, Asp-127, and His-165.

It belongs to the metallo-beta-lactamase superfamily. Glyoxalase II family. Monomer. It depends on Zn(2+) as a cofactor.

The enzyme catalyses an S-(2-hydroxyacyl)glutathione + H2O = a 2-hydroxy carboxylate + glutathione + H(+). It functions in the pathway secondary metabolite metabolism; methylglyoxal degradation; (R)-lactate from methylglyoxal: step 2/2. Functionally, thiolesterase that catalyzes the hydrolysis of S-D-lactoyl-glutathione to form glutathione and D-lactic acid. The chain is Hydroxyacylglutathione hydrolase from Glaesserella parasuis serovar 5 (strain SH0165) (Haemophilus parasuis).